The following is a 160-amino-acid chain: Deoxyuridine 5'-triphosphate nucleotidohydrolase (160 aa).

Substrate contacts are provided by residues 72–74 (RSG), Asn85, and 89–91 (TID).

It belongs to the dUTPase family. Requires Mg(2+) as cofactor.

The enzyme catalyses dUTP + H2O = dUMP + diphosphate + H(+). It functions in the pathway pyrimidine metabolism; dUMP biosynthesis; dUMP from dCTP (dUTP route): step 2/2. Functionally, this enzyme is involved in nucleotide metabolism: it produces dUMP, the immediate precursor of thymidine nucleotides and it decreases the intracellular concentration of dUTP so that uracil cannot be incorporated into DNA. The polypeptide is Deoxyuridine 5'-triphosphate nucleotidohydrolase (Methylocella silvestris (strain DSM 15510 / CIP 108128 / LMG 27833 / NCIMB 13906 / BL2)).